The following is a 218-amino-acid chain: Large ribosomal subunit protein bL25 (218 aa).

Residues serine 187–lysine 218 form a disordered region. Residues glutamate 202–lysine 218 show a composition bias toward low complexity.

It belongs to the bacterial ribosomal protein bL25 family. CTC subfamily. In terms of assembly, part of the 50S ribosomal subunit; part of the 5S rRNA/L5/L18/L25 subcomplex. Contacts the 5S rRNA. Binds to the 5S rRNA independently of L5 and L18.

Functionally, this is one of the proteins that binds to the 5S RNA in the ribosome where it forms part of the central protuberance. The protein is Large ribosomal subunit protein bL25 of Anaplasma marginale (strain St. Maries).